A 95-amino-acid polypeptide reads, in one-letter code: DNA-binding protein CENSYa_1764 (95 aa).

Positions 1–21 (MSYTDPDDSLPEHVPGEAEMS) are disordered.

The protein belongs to the PDCD5 family.

The polypeptide is DNA-binding protein CENSYa_1764 (Cenarchaeum symbiosum (strain A)).